The sequence spans 172 residues: Signal peptidase complex catalytic subunit SEC11 (172 aa).

Residues 1-14 lie on the Cytoplasmic side of the membrane; the sequence is MLSSLQNPRQAAAQ. A helical; Signal-anchor for type II membrane protein transmembrane segment spans residues 15–35; it reads LMNFAMILSTAFMMWKGLSVA. Residues 36–172 are Lumenal-facing; it reads TDSPSPIVVV…MGLLVVIQRE (137 aa). Active-site charge relay system residues include serine 49, histidine 90, and aspartate 115. Residues 158–169 form a C-terminal short (CTS) helix region; sequence VMLGIMGLLVVI.

The protein belongs to the peptidase S26B family. Component of the signal peptidase complex (SPC) composed of a catalytic subunit SEC11 and three accessory subunits SPC1, SPC2 and SPC3. The complex induces a local thinning of the ER membrane which is used to measure the length of the signal peptide (SP) h-region of protein substrates. This ensures the selectivity of the complex towards h-regions shorter than 18-20 amino acids. SPC associates with the translocon complex.

It localises to the endoplasmic reticulum membrane. It catalyses the reaction Cleavage of hydrophobic, N-terminal signal or leader sequences from secreted and periplasmic proteins.. Functionally, catalytic component of the signal peptidase complex (SPC) which catalyzes the cleavage of N-terminal signal sequences from nascent proteins as they are translocated into the lumen of the endoplasmic reticulum. Specifically cleaves N-terminal signal peptides that contain a hydrophobic alpha-helix (h-region) shorter than 18-20 amino acids. The protein is Signal peptidase complex catalytic subunit SEC11 (SEC11) of Metarhizium robertsii (strain ARSEF 23 / ATCC MYA-3075) (Metarhizium anisopliae (strain ARSEF 23)).